Consider the following 342-residue polypeptide: MRANYLLLLAATAVQAAPFIKRYENTTAPASQLSTSLADGSTTILGSSSSSVEEDETITSTIVQYVTVTSSDTTYVSATNTLTTTLTTKPTPVITTEAEDDEEDNETITSTILQYVTVTSSDTTYVSATNTLTTTLTTKAAEATESEEEENETITSTILQYVTVTSSDTTYVSATNTITSVLTTKAAVSTNDVSENAKAATTEDDGETTTSTITSIVTITDANGNTEVLTEVAAETSGAEDASYCVPTTVTVTVTAEQTSEVVSTIVHTTQVPLTAEFTLDDTTTTLTSWVDLTSTDLVTITSTSSVYDSYSTGASQSHPISSYSNYTISDYAPPISSYYSL.

The N-terminal stretch at 1 to 16 is a signal peptide; that stretch reads MRANYLLLLAATAVQA. 3 N-linked (GlcNAc...) asparagine glycosylation sites follow: Asn-25, Asn-105, and Asn-151. Gly-314 carries the GPI-anchor amidated glycine lipid modification. Residues 315 to 342 constitute a propeptide, removed in mature form; the sequence is ASQSHPISSYSNYTISDYAPPISSYYSL. N-linked (GlcNAc...) asparagine glycosylation is present at Asn-326.

It is found in the cell membrane. The polypeptide is Predicted GPI-anchored protein 54 (PGA54) (Candida albicans (strain SC5314 / ATCC MYA-2876) (Yeast)).